Here is a 359-residue protein sequence, read N- to C-terminus: Non-functional pseudokinase ZRK2 (359 aa).

Residues methionine 1–glutamine 10 are compositionally biased toward basic residues. Residues methionine 1 to arginine 20 form a disordered region. Residues leucine 64–phenylalanine 356 enclose the Protein kinase domain. ATP contacts are provided by residues phenylalanine 70–alanine 78 and lysine 97.

It belongs to the protein kinase superfamily. Ser/Thr protein kinase family. ZRK subfamily.

The chain is Non-functional pseudokinase ZRK2 from Arabidopsis thaliana (Mouse-ear cress).